The following is a 549-amino-acid chain: Glucose-6-phosphate isomerase (549 aa).

Glu355 functions as the Proton donor in the catalytic mechanism. Residues His386 and Lys514 contribute to the active site.

It belongs to the GPI family.

The protein localises to the cytoplasm. The catalysed reaction is alpha-D-glucose 6-phosphate = beta-D-fructose 6-phosphate. It participates in carbohydrate biosynthesis; gluconeogenesis. It functions in the pathway carbohydrate degradation; glycolysis; D-glyceraldehyde 3-phosphate and glycerone phosphate from D-glucose: step 2/4. In terms of biological role, catalyzes the reversible isomerization of glucose-6-phosphate to fructose-6-phosphate. This is Glucose-6-phosphate isomerase from Salmonella schwarzengrund (strain CVM19633).